The chain runs to 171 residues: MTDSPRPELDMETQEFVHQLFDLARQGNSQRLEQLLQQGLPPNLRNHKGDSLLMLASYHGHADTVRLLLAYKADPDLRNLAGQTPLAGAAFKGDLAMVELLLAGGADVEGASADGKTALMMAAMFNQAEVAASLLAHGARRDAQDAAGLTPLAAARMMNAEATVALLSRPH.

ANK repeat units lie at residues 48-77 (KGDS…DPDL), 81-110 (AGQT…DVEG), and 114-143 (DGKT…RRDA).

The polypeptide is Putative ankyrin repeat protein PA3287 (Pseudomonas aeruginosa (strain ATCC 15692 / DSM 22644 / CIP 104116 / JCM 14847 / LMG 12228 / 1C / PRS 101 / PAO1)).